The following is a 462-amino-acid chain: MGKEKTHINIVVIGHVDSGKSTTTGHLIYKCGGIDKRTIEKFEKEAAEMGKGSFKYAWVLDKLKAERERGITIDISLWKFETSKYYVTIIDAPGHRDFIKNMITGTSQADCAVLIVAAGVGEFEAGISKNGQTREHALLAYTLGVKQLIVGVNKMDSTEPPYSQKRYEEIVKEVSTYIKKIGYNPDTVAFVPISGWNGDNMLEPSSNMPWFKGWKVTRKDGNASGTTLLEALDCILPPTRPTDKPLRLPLQDVYKIGGIGTVPVGRVETGVLKPGMVVTFAPVNVTTEVKSVEMHHEALSEALPGDNVGFNVKNVSVKDVRRGNVAGDSKNDPPMEAAGFTAQVIILNHPGQISAGYAPVLDCHTAHIACKFAELKEKIDRRSGKKLEDGPKFLKSGDAAIVDMIPGKPMCVESFSDYPPLGRFAVRDMRQTVAVGVIKAVDKKAGGAGKVTKSAQKAQKAK.

Position 2 is a n,N,N-trimethylglycine (G2). In terms of domain architecture, tr-type G spans 5-242 (KTHINIVVIG…DCILPPTRPT (238 aa)). Residues 14–21 (GHVDSGKS) are G1. 14-21 (GHVDSGKS) lines the GTP pocket. Residues 70–74 (GITID) form a G2 region. A G3 region spans residues 91–94 (DAPG). GTP is bound by residues 153-156 (NKMD) and 194-196 (SGW). Positions 153–156 (NKMD) are G4. The interval 194–196 (SGW) is G5. 2 positions are modified to 5-glutamyl glycerylphosphorylethanolamine: E301 and E374.

This sequence belongs to the TRAFAC class translation factor GTPase superfamily. Classic translation factor GTPase family. EF-Tu/EF-1A subfamily.

The protein localises to the cytoplasm. It catalyses the reaction GTP + H2O = GDP + phosphate + H(+). Functionally, translation elongation factor that catalyzes the GTP-dependent binding of aminoacyl-tRNA (aa-tRNA) to the A-site of ribosomes during the elongation phase of protein synthesis. Base pairing between the mRNA codon and the aa-tRNA anticodon promotes GTP hydrolysis, releasing the aa-tRNA from EEF1A1 and allowing its accommodation into the ribosome. The growing protein chain is subsequently transferred from the P-site peptidyl tRNA to the A-site aa-tRNA, extending it by one amino acid through ribosome-catalyzed peptide bond formation. The protein is Elongation factor 1-alpha 1 (EEF1A) of Gallus gallus (Chicken).